Here is a 433-residue protein sequence, read N- to C-terminus: Tol-Pal system protein TolB (433 aa).

An N-terminal signal peptide occupies residues 1 to 21; it reads MRNLLRGMLVVICCMAGIAAA.

The protein belongs to the TolB family. In terms of assembly, the Tol-Pal system is composed of five core proteins: the inner membrane proteins TolA, TolQ and TolR, the periplasmic protein TolB and the outer membrane protein Pal. They form a network linking the inner and outer membranes and the peptidoglycan layer.

It localises to the periplasm. Part of the Tol-Pal system, which plays a role in outer membrane invagination during cell division and is important for maintaining outer membrane integrity. This is Tol-Pal system protein TolB from Pseudomonas fluorescens (strain ATCC BAA-477 / NRRL B-23932 / Pf-5).